The chain runs to 708 residues: ATP-dependent RNA helicase laf-1 (708 aa).

A compositionally biased stretch (low complexity) spans 1-21 (MESNQSNNGGSGNAALNRGGR). The tract at residues 1-191 (MESNQSNNGG…RGTSKWENRG (191 aa)) is disordered. Gly residues predominate over residues 48-70 (GAGGGGYRRGGGNSGGGGGGGYD). 2 stretches are compositionally biased toward basic and acidic residues: residues 72-83 (GYNDNRDDRDNR) and 90-99 (GRDRNYEDRG). A compositionally biased stretch (gly residues) spans 100-123 (YNGGGGGGGNRGYNNNRGGGGGGY). The Q motif motif lies at 231 to 259 (SLFSDLSLHEWIEENIKTAGYDRPTPVQK). One can recognise a Helicase ATP-binding domain in the interval 262–453 (IPALQGGRDL…QDFLKENYVF (192 aa)). 275–282 (AQTGSGKT) provides a ligand contact to ATP. Residues 397-400 (DEAD) carry the DEAD box motif. A Helicase C-terminal domain is found at 465–626 (NIMQKIVWVE…ELPDWLEGMS (162 aa)). A disordered region spans residues 623–708 (EGMSGDMRSG…RAQPQQDWWS (86 aa)). 2 stretches are compositionally biased toward gly residues: residues 630–647 (RSGG…GQRF) and 656–692 (GGSG…GGGR). Positions 699–708 (RAQPQQDWWS) are enriched in polar residues.

It belongs to the DEAD box helicase family. DDX3/DED1 subfamily. As to quaternary structure, binds RNA as a monomer at low laf-1 concentrations and as a dimer at high laf-1 concentrations. As to expression, expressed in the germline and soma of young adult hermaphrodites.

Its subcellular location is the cytoplasm. It is found in the cytoplasmic granule. The protein resides in the nucleus. The protein localises to the stress granule. It localises to the inflammasome. Its subcellular location is the cell membrane. It is found in the cell projection. The protein resides in the lamellipodium. It carries out the reaction ATP + H2O = ADP + phosphate + H(+). Its function is as follows. Multifunctional ATP-dependent RNA helicase. Plays a role in RNA remodeling, but is not required for RNA unwinding. Binds to RNA in a concentration-dependent manner to stimulate annealing between two complementary strands of RNA. This process is also dependent upon ATP; ATP reduces binding to RNA and subsequently diminishes RNA annealing. Involved in many cellular processes, which do not necessarily require its ATPase/helicase catalytic activities. Involved in the regulation of transcription and translation initiation. Involved in innate immunity. Involved in both stress and inflammatory responses. Promotes liquid-liquid phase separation of P granules, which is a process important for intracellular organization and stress granule assembly. Required for embryonic development. Plays a role in sexual cell fate determination by negatively regulating the translation of the sex determining protein tra-2. May play a protective role in the response to heat and oxidative stress. May negatively regulate extrinsic apoptotic signaling pathway via death domain receptors. May be involved in mitotic chromosome segregation. The protein is ATP-dependent RNA helicase laf-1 of Caenorhabditis elegans.